Here is a 516-residue protein sequence, read N- to C-terminus: Maintenance of mitochondrial morphology protein 1 (516 aa).

At 1–43 the chain is on the lumenal side; sequence MAGSTSASLQTPYFPSSTQINPVRVDHTLPLPPAQPSLSFTQG. The chain crosses the membrane as a helical span at residues 44–64; sequence LLVGQLSVVLLIGAFIKFFIF. Topologically, residues 65–516 are cytoplasmic; that stretch reads GEAPPPPSRG…GSMPDTVTET (452 aa). 4 disordered regions span residues 70–118, 295–349, 420–466, and 485–516; these read PPSR…SSST, TSDQ…SKHG, RTGL…IDRG, and GGHQ…VTET. Polar residues-rich tracts occupy residues 74-96, 105-118, and 295-312; these read GLSN…TDSS, STSN…SSST, and TSDQ…TTSE. The SMP-LTD domain maps to 151 to 412; sequence QPESLDWFNV…EPRVQVVGLP (262 aa). Residues 449 to 460 show a composition bias toward gly residues; that stretch reads GVSGGGGGGGSM.

This sequence belongs to the MMM1 family. Homodimer. Component of the ER-mitochondria encounter structure (ERMES) or MDM complex, composed of MMM1, MDM10, MDM12 and MDM34. An MMM1 homodimer associates with one molecule of MDM12 on each side in a pairwise head-to-tail manner, and the SMP-LTD domains of MMM1 and MDM12 generate a continuous hydrophobic tunnel for phospholipid trafficking.

Its subcellular location is the endoplasmic reticulum membrane. Its function is as follows. Component of the ERMES/MDM complex, which serves as a molecular tether to connect the endoplasmic reticulum (ER) and mitochondria. Components of this complex are involved in the control of mitochondrial shape and protein biogenesis, and function in nonvesicular lipid trafficking between the ER and mitochondria. The MDM12-MMM1 subcomplex functions in the major beta-barrel assembly pathway that is responsible for biogenesis of all outer membrane beta-barrel proteins, and acts in a late step after the SAM complex. The MDM10-MDM12-MMM1 subcomplex further acts in the TOM40-specific pathway after the action of the MDM12-MMM1 complex. Essential for establishing and maintaining the structure of mitochondria and maintenance of mtDNA nucleoids. This chain is Maintenance of mitochondrial morphology protein 1, found in Paracoccidioides brasiliensis (strain Pb18).